A 438-amino-acid polypeptide reads, in one-letter code: Exosome complex component RRP45 (438 aa).

Residue serine 65 is modified to Phosphoserine. Lysine 297 is modified (N6-acetyllysine; alternate). A Glycyl lysine isopeptide (Lys-Gly) (interchain with G-Cter in SUMO1); alternate cross-link involves residue lysine 297. A Glycyl lysine isopeptide (Lys-Gly) (interchain with G-Cter in SUMO2); alternate cross-link involves residue lysine 297. A phosphoserine mark is found at serine 306 and serine 346. Disordered regions lie at residues 337 to 365 (AQIGDGIENSWGDLEDSEKEEEEEEGGID) and 377 to 438 (TGEV…RTAN). Positions 349 to 364 (DLEDSEKEEEEEEGGI) are enriched in acidic residues. 2 positions are modified to phosphoserine: serine 393 and serine 395. Basic residues predominate over residues 427-438 (QGKRKKKKRTAN).

Belongs to the RNase PH family. In terms of assembly, component of the RNA exosome core complex (Exo-9), composed of EXOSC1, EXOSC2, EXOSC3, EXOSC4, EXOSC5, EXOSC6, EXOSC7, EXOSC8 and EXOSC9; within the complex interacts with EXOSC3, EXOSC4, EXOSC5 and DIS3. The catalytically inactive RNA exosome core complex (Exo-9) associates with the catalytic subunit EXOSC10/RRP6. Exo-9 may associate with DIS3 to form the nucleolar exosome complex, or DIS3L to form the cytoplasmic exosome complex. Exo-9 is formed by a hexameric base ring consisting of the heterodimers EXOSC4-EXOSC9, EXOSC5-EXOSC8 and EXOSC6-EXOSC7, and a cap ring consisting of EXOSC1, EXOSC2 and EXOSC3. The RNA exosome complex associates with cofactors C1D/RRP47, MPHOSPH6/MPP6 and MTREX/MTR4. Interacts (via C-terminus region) with SETX (via N-terminus domain); the interaction enhances SETX sumoylation. Interacts with DIS3; the interaction is direct.

The protein localises to the cytoplasm. It is found in the nucleus. The protein resides in the nucleolus. It localises to the nucleoplasm. In terms of biological role, non-catalytic component of the RNA exosome complex which has 3'-&gt;5' exoribonuclease activity and participates in a multitude of cellular RNA processing and degradation events. In the nucleus, the RNA exosome complex is involved in proper maturation of stable RNA species such as rRNA, snRNA and snoRNA, in the elimination of RNA processing by-products and non-coding 'pervasive' transcripts, such as antisense RNA species and promoter-upstream transcripts (PROMPTs), and of mRNAs with processing defects, thereby limiting or excluding their export to the cytoplasm. The RNA exosome may be involved in Ig class switch recombination (CSR) and/or Ig variable region somatic hypermutation (SHM) by targeting AICDA deamination activity to transcribed dsDNA substrates. In the cytoplasm, the RNA exosome complex is involved in general mRNA turnover and specifically degrades inherently unstable mRNAs containing AU-rich elements (AREs) within their 3' untranslated regions, and in RNA surveillance pathways, preventing translation of aberrant mRNAs. It seems to be involved in degradation of histone mRNA. The catalytic inactive RNA exosome core complex of 9 subunits (Exo-9) is proposed to play a pivotal role in the binding and presentation of RNA for ribonucleolysis, and to serve as a scaffold for the association with catalytic subunits and accessory proteins or complexes. EXOSC9 binds to ARE-containing RNAs. The polypeptide is Exosome complex component RRP45 (Exosc9) (Mus musculus (Mouse)).